The following is a 607-amino-acid chain: Elongation factor 4 (607 aa).

Residues 11–193 (SKIRNFSIIA…QIVEKVPAPT (183 aa)) enclose the tr-type G domain. GTP is bound by residues 23-28 (DHGKST) and 140-143 (NKID).

Belongs to the TRAFAC class translation factor GTPase superfamily. Classic translation factor GTPase family. LepA subfamily.

The protein localises to the cell membrane. It catalyses the reaction GTP + H2O = GDP + phosphate + H(+). Its function is as follows. Required for accurate and efficient protein synthesis under certain stress conditions. May act as a fidelity factor of the translation reaction, by catalyzing a one-codon backward translocation of tRNAs on improperly translocated ribosomes. Back-translocation proceeds from a post-translocation (POST) complex to a pre-translocation (PRE) complex, thus giving elongation factor G a second chance to translocate the tRNAs correctly. Binds to ribosomes in a GTP-dependent manner. The sequence is that of Elongation factor 4 from Bacillus anthracis (strain CDC 684 / NRRL 3495).